We begin with the raw amino-acid sequence, 857 residues long: DNA mismatch repair protein MutS (857 aa).

613–620 (GPNMGGKS) is an ATP binding site. Residues 797-820 (TSLPHEQPAAHKAKDAPQVPHQSD) form a disordered region.

The protein belongs to the DNA mismatch repair MutS family.

In terms of biological role, this protein is involved in the repair of mismatches in DNA. It is possible that it carries out the mismatch recognition step. This protein has a weak ATPase activity. In Pseudomonas putida (strain ATCC 47054 / DSM 6125 / CFBP 8728 / NCIMB 11950 / KT2440), this protein is DNA mismatch repair protein MutS.